We begin with the raw amino-acid sequence, 555 residues long: Oxygen-dependent choline dehydrogenase (555 aa).

4-33 (DYIIIGAGSAGNVLATRLTEDADVSVLLLE) provides a ligand contact to FAD. The tract at residues 180–202 (QQEGFGPMDRTVTPKGRRASTAR) is disordered. The Proton acceptor role is filled by His473.

Belongs to the GMC oxidoreductase family. Requires FAD as cofactor.

It catalyses the reaction choline + A = betaine aldehyde + AH2. The catalysed reaction is betaine aldehyde + NAD(+) + H2O = glycine betaine + NADH + 2 H(+). The protein operates within amine and polyamine biosynthesis; betaine biosynthesis via choline pathway; betaine aldehyde from choline (cytochrome c reductase route): step 1/1. Involved in the biosynthesis of the osmoprotectant glycine betaine. Catalyzes the oxidation of choline to betaine aldehyde and betaine aldehyde to glycine betaine at the same rate. This Serratia proteamaculans (strain 568) protein is Oxygen-dependent choline dehydrogenase.